Reading from the N-terminus, the 260-residue chain is tRNA pseudouridine synthase B (260 aa).

Histidine 44 is a substrate binding site. Aspartate 49 functions as the Nucleophile in the catalytic mechanism. The substrate site is built by tyrosine 77, tyrosine 180, and leucine 201.

The protein belongs to the pseudouridine synthase TruB family. Type 1 subfamily.

It catalyses the reaction uridine(55) in tRNA = pseudouridine(55) in tRNA. Its function is as follows. Responsible for synthesis of pseudouridine from uracil-55 in the psi GC loop of transfer RNAs. The chain is tRNA pseudouridine synthase B from Blochmanniella pennsylvanica (strain BPEN).